We begin with the raw amino-acid sequence, 128 residues long: Ribonuclease pancreatic (128 aa).

The span at 1-13 (KESPAMKFERQHM) shows a compositional bias: basic and acidic residues. The interval 1–26 (KESPAMKFERQHMDSGSTSSSNPTYC) is disordered. Residues Lys7 and Arg10 each coordinate substrate. Catalysis depends on His12, which acts as the Proton acceptor. Polar residues predominate over residues 14-26 (DSGSTSSSNPTYC). 4 cysteine pairs are disulfide-bonded: Cys26–Cys84, Cys40–Cys95, Cys58–Cys110, and Cys65–Cys72. Asn34 carries an N-linked (GlcNAc...) asparagine glycan. 41–45 (KPVNT) provides a ligand contact to substrate. Asn62 carries an N-linked (GlcNAc...) asparagine glycan. 2 residues coordinate substrate: Lys66 and Arg85. His119 (proton donor) is an active-site residue.

The protein belongs to the pancreatic ribonuclease family. Monomer. Interacts with and forms tight 1:1 complexes with RNH1. Dimerization of two such complexes may occur. Interaction with RNH1 inhibits this protein. In terms of tissue distribution, pancreas.

It localises to the secreted. The enzyme catalyses an [RNA] containing cytidine + H2O = an [RNA]-3'-cytidine-3'-phosphate + a 5'-hydroxy-ribonucleotide-3'-[RNA].. It carries out the reaction an [RNA] containing uridine + H2O = an [RNA]-3'-uridine-3'-phosphate + a 5'-hydroxy-ribonucleotide-3'-[RNA].. Its function is as follows. Endonuclease that catalyzes the cleavage of RNA on the 3' side of pyrimidine nucleotides. Acts on single-stranded and double-stranded RNA. This is Ribonuclease pancreatic (RNASE1) from Equus caballus (Horse).